The chain runs to 514 residues: 2,3-bisphosphoglycerate-independent phosphoglycerate mutase (514 aa).

Asp-14 and Ser-64 together coordinate Mn(2+). Ser-64 acts as the Phosphoserine intermediate in catalysis. Residues His-125, 155 to 156, Arg-187, Arg-193, 263 to 266, and Lys-336 each bind substrate; these read RD and RADR. 5 residues coordinate Mn(2+): Asp-403, His-407, Asp-444, His-445, and His-463.

It belongs to the BPG-independent phosphoglycerate mutase family. In terms of assembly, monomer. Mn(2+) is required as a cofactor.

The enzyme catalyses (2R)-2-phosphoglycerate = (2R)-3-phosphoglycerate. The protein operates within carbohydrate degradation; glycolysis; pyruvate from D-glyceraldehyde 3-phosphate: step 3/5. Catalyzes the interconversion of 2-phosphoglycerate and 3-phosphoglycerate. This Shigella dysenteriae serotype 1 (strain Sd197) protein is 2,3-bisphosphoglycerate-independent phosphoglycerate mutase.